The following is a 274-amino-acid chain: Protein-export membrane protein SecF (274 aa).

6 helical membrane passes run 14–34 (LLILTMVFAVICAGSTLALGV), 121–141 (SVKVAVPLALVAVSIVVFAIF), 143–163 (KPLLSAAVLGALALDLVDALG), 175–197 (ASFAGLLMIIGYAVDSNILLSMY), 217–237 (TGITMVATTTAAACALFLLSM), and 247–267 (VVIFGLIADVLNTWIFNAWVI).

It belongs to the SecD/SecF family. SecF subfamily. As to quaternary structure, part of the protein translocation apparatus. Forms a complex with SecD.

Its subcellular location is the cell membrane. In terms of biological role, involved in protein export. The polypeptide is Protein-export membrane protein SecF (Methanopyrus kandleri (strain AV19 / DSM 6324 / JCM 9639 / NBRC 100938)).